The following is a 255-amino-acid chain: Ribosomal RNA small subunit methyltransferase G (255 aa).

S-adenosyl-L-methionine is bound by residues G89, F94, D112–T114, V140–E141, and R159.

It belongs to the methyltransferase superfamily. RNA methyltransferase RsmG family.

The protein localises to the cytoplasm. Functionally, specifically methylates the N7 position of a guanine in 16S rRNA. The chain is Ribosomal RNA small subunit methyltransferase G from Trichodesmium erythraeum (strain IMS101).